Here is a 555-residue protein sequence, read N- to C-terminus: CTP synthase (555 aa).

Residues 1–265 (MTRYIFITGG…GNRVCEKLNI (265 aa)) are amidoligase domain. Residue serine 13 participates in CTP binding. Serine 13 is a binding site for UTP. Residues 14–19 (SLGKGI) and aspartate 71 contribute to the ATP site. Mg(2+)-binding residues include aspartate 71 and glutamate 139. CTP is bound by residues 146 to 148 (DIE), 186 to 191 (KTKPTQ), and lysine 222. Residues 186 to 191 (KTKPTQ) and lysine 222 contribute to the UTP site. One can recognise a Glutamine amidotransferase type-1 domain in the interval 290–541 (TVAVVGKYVD…IKAGLAAKEA (252 aa)). Glycine 351 is an L-glutamine binding site. The active-site Nucleophile; for glutamine hydrolysis is the cysteine 378. L-glutamine contacts are provided by residues 379–382 (LGMQ), glutamate 402, and arginine 469. Active-site residues include histidine 514 and glutamate 516.

This sequence belongs to the CTP synthase family. Homotetramer.

The enzyme catalyses UTP + L-glutamine + ATP + H2O = CTP + L-glutamate + ADP + phosphate + 2 H(+). It carries out the reaction L-glutamine + H2O = L-glutamate + NH4(+). It catalyses the reaction UTP + NH4(+) + ATP = CTP + ADP + phosphate + 2 H(+). The protein operates within pyrimidine metabolism; CTP biosynthesis via de novo pathway; CTP from UDP: step 2/2. With respect to regulation, allosterically activated by GTP, when glutamine is the substrate; GTP has no effect on the reaction when ammonia is the substrate. The allosteric effector GTP functions by stabilizing the protein conformation that binds the tetrahedral intermediate(s) formed during glutamine hydrolysis. Inhibited by the product CTP, via allosteric rather than competitive inhibition. Its function is as follows. Catalyzes the ATP-dependent amination of UTP to CTP with either L-glutamine or ammonia as the source of nitrogen. Regulates intracellular CTP levels through interactions with the four ribonucleotide triphosphates. This Coxiella burnetii (strain RSA 493 / Nine Mile phase I) protein is CTP synthase.